The chain runs to 231 residues: Mediator of RNA polymerase II transcription subunit 18 (231 aa).

Positions 191 to 218 form a coiled coil; the sequence is HLTDIEALNKAVKELEKVKTELHGLMNL.

This sequence belongs to the Mediator complex subunit 18 family. In terms of assembly, component of the Mediator complex.

It is found in the nucleus. Component of the Mediator complex, a coactivator involved in the regulated transcription of nearly all RNA polymerase II-dependent genes. Mediator functions as a bridge to convey information from gene-specific regulatory proteins to the basal RNA polymerase II transcription machinery. Mediator is recruited to promoters by direct interactions with regulatory proteins and serves as a scaffold for the assembly of a functional preinitiation complex with RNA polymerase II and the general transcription factors. In Yarrowia lipolytica (strain CLIB 122 / E 150) (Yeast), this protein is Mediator of RNA polymerase II transcription subunit 18 (SRB5).